Consider the following 445-residue polypeptide: UPF0210 protein Ccon26_06850 (445 aa).

Belongs to the UPF0210 family. Homodimer.

The polypeptide is UPF0210 protein Ccon26_06850 (Campylobacter concisus (strain 13826)).